The chain runs to 215 residues: ATP-dependent Clp protease proteolytic subunit 1 (215 aa).

S111 (nucleophile) is an active-site residue. H136 is a catalytic residue.

Belongs to the peptidase S14 family. In terms of assembly, fourteen ClpP subunits assemble into 2 heptameric rings which stack back to back to give a disk-like structure with a central cavity, resembling the structure of eukaryotic proteasomes.

The protein localises to the cytoplasm. The catalysed reaction is Hydrolysis of proteins to small peptides in the presence of ATP and magnesium. alpha-casein is the usual test substrate. In the absence of ATP, only oligopeptides shorter than five residues are hydrolyzed (such as succinyl-Leu-Tyr-|-NHMec, and Leu-Tyr-Leu-|-Tyr-Trp, in which cleavage of the -Tyr-|-Leu- and -Tyr-|-Trp bonds also occurs).. Its function is as follows. Cleaves peptides in various proteins in a process that requires ATP hydrolysis. Has a chymotrypsin-like activity. Plays a major role in the degradation of misfolded proteins. In Gluconobacter oxydans (strain 621H) (Gluconobacter suboxydans), this protein is ATP-dependent Clp protease proteolytic subunit 1.